We begin with the raw amino-acid sequence, 539 residues long: Chaperonin GroEL (539 aa).

ATP is bound by residues 29-32 (TIGP), 86-90 (DGTTT), Gly413, 476-478 (NAA), and Asp492.

It belongs to the chaperonin (HSP60) family. Forms a cylinder of 14 subunits composed of two heptameric rings stacked back-to-back. Interacts with the co-chaperonin GroES.

Its subcellular location is the cytoplasm. The enzyme catalyses ATP + H2O + a folded polypeptide = ADP + phosphate + an unfolded polypeptide.. Together with its co-chaperonin GroES, plays an essential role in assisting protein folding. The GroEL-GroES system forms a nano-cage that allows encapsulation of the non-native substrate proteins and provides a physical environment optimized to promote and accelerate protein folding. This Staphylococcus epidermidis protein is Chaperonin GroEL.